The following is a 673-amino-acid chain: MDRIKAKINELKQKLDQWNYEYYVLDDPSVPDHVYDQAMRELIELENAYPQFKTNNSPSVRVGGFVSEKFNKVKHKRPMLSLSNAFDANDLRKFDQDNQNASVDLKGYVVEPKIDGLSISIIYKNAKLHQAITRGDGVNGEDVTSNILTIKDIPHYIDQKYKDYEIEVRGEVYMAFHDFYEMNDNLEESDKKFANPRNAAAGTLRSLDNSIVAERKLSAFMYYLVNAQELGIKTHYESIQFLKDNKFKVSDLIVKVDTIDEVINQIDRYTKVRNDLSYMIDGIVIKINNLEVYDEIGYTSKFPKWAIAYKFPANVVSSQLLEIINDVGRTGKISYVAKIKPILLDGSIVEYATLHNFDFIKEKDIRINDEIKIYKAGDVIPYVDGVDLSKRLANSVPYESITNCPSCQSVLVRENDEVDQRCLNIYGCKKINIEKIVYFVSRNCMNIEGMSDAIINKFYDANLIKNVADLYYLQKHKEFILASDFKIKDKSFSNLINSINNSKTRSLEFLLTAFGIRHVGPNLAKKLAKQFKTMTTLMHANFGELTNVDACGEKAALSLINWFNDDHNVSLVNQLQQVGVNMEYIDDFIYDDNINIIDEYKNKTFVITGSFSISRDEIKTILEKYYHAKVKNSVSKKTDYVLAGIEAGTKLEKAKLLGVKIIENEFWKKDNNF.

NAD(+) is bound by residues 32–36, 81–82, and Glu-111; these read DHVYD and SL. Lys-113 serves as the catalytic N6-AMP-lysine intermediate. Residues Arg-134, Glu-171, Lys-286, and Lys-310 each contribute to the NAD(+) site. Zn(2+) contacts are provided by Cys-404, Cys-407, Cys-422, and Cys-428. Residues 595-673 form the BRCT domain; the sequence is NIIDEYKNKT…NEFWKKDNNF (79 aa).

This sequence belongs to the NAD-dependent DNA ligase family. LigA subfamily. Requires Mg(2+) as cofactor. Mn(2+) serves as cofactor.

It carries out the reaction NAD(+) + (deoxyribonucleotide)n-3'-hydroxyl + 5'-phospho-(deoxyribonucleotide)m = (deoxyribonucleotide)n+m + AMP + beta-nicotinamide D-nucleotide.. DNA ligase that catalyzes the formation of phosphodiester linkages between 5'-phosphoryl and 3'-hydroxyl groups in double-stranded DNA using NAD as a coenzyme and as the energy source for the reaction. It is essential for DNA replication and repair of damaged DNA. The polypeptide is DNA ligase (Ureaplasma urealyticum serovar 10 (strain ATCC 33699 / Western)).